Here is an 89-residue protein sequence, read N- to C-terminus: MAKFSAIITDKVGLHARPASVLAKEASKFSSNITIIANEKQGNLKSIMNVMAMAIKTGTEITIQADGNDADQAIQAIKQTMIDTALIQG.

Residues 2–89 (AKFSAIITDK…TMIDTALIQG (88 aa)) enclose the HPr domain. Histidine 15 acts as the Pros-phosphohistidine intermediate in catalysis. Position 46 is a phosphoserine; by HPrK/P (serine 46).

The protein belongs to the HPr family.

The protein resides in the cytoplasm. With respect to regulation, phosphorylation on Ser-46 inhibits the phosphoryl transfer from enzyme I to HPr. Functionally, general (non sugar-specific) component of the phosphoenolpyruvate-dependent sugar phosphotransferase system (sugar PTS). This major carbohydrate active-transport system catalyzes the phosphorylation of incoming sugar substrates concomitantly with their translocation across the cell membrane. The phosphoryl group from phosphoenolpyruvate (PEP) is transferred to the phosphoryl carrier protein HPr by enzyme I. Phospho-HPr then transfers it to the PTS EIIA domain. In terms of biological role, P-Ser-HPr interacts with the catabolite control protein A (CcpA), forming a complex that binds to DNA at the catabolite response elements cre, operator sites preceding a large number of catabolite-regulated genes. Thus, P-Ser-HPr is a corepressor in carbon catabolite repression (CCR), a mechanism that allows bacteria to coordinate and optimize the utilization of available carbon sources. P-Ser-HPr also plays a role in inducer exclusion, in which it probably interacts with several non-PTS permeases and inhibits their transport activity. The sequence is that of Phosphocarrier protein HPr (ptsH) from Mycoplasma capricolum subsp. capricolum (strain California kid / ATCC 27343 / NCTC 10154).